Reading from the N-terminus, the 638-residue chain is XK-related protein 6 (638 aa).

Disordered regions lie at residues 24–43 (VGSG…GGDG) and 82–117 (RSAA…PASP). The span at 33–43 (PGGGGCGGGDG) shows a compositional bias: gly residues. A run of 7 helical transmembrane segments spans residues 127–147 (LWIV…LWLA), 158–178 (CFGL…SLSF), 315–335 (TLPC…LASY), 369–389 (VISF…FVVV), 410–430 (WEEI…WFNV), 439–459 (MFAY…LWYF), and 470–490 (AVPA…LMLL).

The protein belongs to the XK family.

Its subcellular location is the cell membrane. This Mus musculus (Mouse) protein is XK-related protein 6.